The primary structure comprises 311 residues: Olfactory receptor 52J3 (311 aa).

The Extracellular portion of the chain corresponds to 1–27; that stretch reads MFYHNKSIFHPVTFFLIGIPGLEDFHM. Asn-5 is a glycosylation site (N-linked (GlcNAc...) asparagine). A helical transmembrane segment spans residues 28–48; that stretch reads WISGPFCSVYLVALLGNATIL. Topologically, residues 49–56 are cytoplasmic; it reads LVIKVEQT. A helical transmembrane segment spans residues 57-77; that stretch reads LREPMFYFLAILSTIDLALST. Residues 78 to 101 lie on the Extracellular side of the membrane; that stretch reads TSVPRMLGIFWFDAHEINYGACVA. Cysteines 99 and 191 form a disulfide. Residues 102–122 traverse the membrane as a helical segment; that stretch reads QMFLIHAFTGMEAEVLLAMAF. Topologically, residues 123–141 are cytoplasmic; that stretch reads DRYVAVCAPLHYATILTSQ. The helical transmembrane segment at 142–162 threads the bilayer; it reads VLVGISMCIVIRPVLLTLPMV. Over 163–198 the chain is Extracellular; it reads YLIYRLPFCQAHIIAHSYCEHMGIAKLSCGNIRING. Residues 199-218 traverse the membrane as a helical segment; sequence IYGLFVVSFFVLNLVLIGIS. Residues 219–238 lie on the Cytoplasmic side of the membrane; the sequence is YVYILRAVFRLPSHDAQLKA. A helical transmembrane segment spans residues 239 to 259; sequence LSTCGAHVGVICVFYIPSVFS. The Extracellular segment spans residues 260–274; sequence FLTHRFGHQIPGYIH. Residues 275-295 traverse the membrane as a helical segment; that stretch reads ILVANLYLIIPPSLNPIIYGV. At 296 to 311 the chain is on the cytoplasmic side; the sequence is RTKQIRERVLYVFTKK.

The protein belongs to the G-protein coupled receptor 1 family.

It is found in the cell membrane. Its function is as follows. Odorant receptor. The sequence is that of Olfactory receptor 52J3 (OR52J3) from Homo sapiens (Human).